A 2641-amino-acid chain; its full sequence is Prosolanapyrone synthase (2641 aa).

The region spanning 14–440 is the Ketosynthase family 3 (KS3) domain; that stretch reads PEPIAIVGMG…GANGHCIIDD (427 aa). Catalysis depends on for beta-ketoacyl synthase activity residues C187, H323, and H363. Residues 456–515 are disordered; it reads SIGHINGHTNGHTNGHTNGHTNGHTNGHTNGHTNGAHASDGHNGHHQNGMNGNSASHMSE. Positions 461-490 are enriched in low complexity; the sequence is NGHTNGHTNGHTNGHTNGHTNGHTNGHTNG. The tract at residues 619–920 is malonyl-CoA:ACP transacylase (MAT); it reads FVFTGQGAQW…KGPVGQISRS (302 aa). The interval 1011–1149 is N-terminal hotdog fold; it reads HDLLGSKLPG…GRVRVIAGTS (139 aa). A dehydratase (DH) domain region spans residues 1011-1309; the sequence is HDLLGSKLPG…GNLRCVTYTE (299 aa). In terms of domain architecture, PKS/mFAS DH spans 1011–1313; that stretch reads HDLLGSKLPG…CVTYTEVLPS (303 aa). The Proton acceptor; for dehydratase activity role is filled by H1043. The interval 1161 to 1313 is C-terminal hotdog fold; the sequence is ARTLDTKAWY…CVTYTEVLPS (153 aa). Catalysis depends on D1227, which acts as the Proton donor; for dehydratase activity. The methyltransferase (MT) domain stretch occupies residues 1477–1665; that stretch reads TGAYPQLVRF…GAELVLDDYP (189 aa). The enoyl reductase (ER) domain stretch occupies residues 1894-2206; it reads GLLTSLYFKP…KGTHVGKLVV (313 aa). The interval 2231–2408 is ketoreductase (KR) domain; the sequence is NYLITGGLGG…STVSFGLIRD (178 aa). Positions 2561 to 2639 constitute a Carrier domain; the sequence is RTVALVTDAI…ILANKIVDGA (79 aa). The residue at position 2598 (S2598) is an O-(pantetheine 4'-phosphoryl)serine.

It functions in the pathway phytotoxin biosynthesis. In terms of biological role, prosolanapyrone synthase; part of the gene cluster that mediates the biosynthesis of the phytotoxin solanapyrone, a causal agent of early blight disease of potato and tomato. The prosolanapyrone synthase sol1 is a polyketide synthase that produces the octaketide desmethylprosolanapyrone I via sequential condensations of 7 malonyl-CoA units with one acetyl-CoA unit, and one methylation step. The octaketide backbone is further methylated by the sol2 O-methyltransferase to yield prosolanapyrone I. Prosolanapyrone I is hydroxylated to prosolanapyrone II by the cytochrome P450 monooxygenase sol6. The solanapyrone synthase sol5 then catalyzes the oxidation of prosolanapyrone II and the subsequent Diels Alder cycloisomerization of the product prosolanapyrone III to solanapyrones A and D. Solanapyrones A and D are then converted into solanapyrones B and E, respectively, by the sol3 dehydrogenase. In Alternaria solani, this protein is Prosolanapyrone synthase (sol1).